Consider the following 1549-residue polypeptide: MISISKRTSIARINLSEFHTISKIDRYPWLNKEKDACGVGFIAHLDNKFGHKLMMNALEALATMEHRGACSADEESGDGAGILFSIPWKFFVEWSLRYKQFKINISQAAVAMLFLPCLSSDIQVSKNIVEEIFQDEDFIVIGWREVPYVKEVLGPLALRNMPQIYQIVVQSKRYQGRSLDFHLYRVRRKIEKEITVRAYSWAKDFYFCSCSNHTIVYKGMVKSTSLGQFYQDLYNPDFEISFAVFHRRFSTNTMPRWPLAQPMRILGHNGEINTLLGNLKWMEARESSLNHPTLNEVASIGPVVNVSNSDSANLDSVVELFLHVGHSCPEALMFLIPEAYENNPKLKYHQNLISFYEYCAGFQEAWDGPALIVFSDGHTVGASLDRNGLRPARYCVTEDNVLILASEGGVLNLDPSLIRLKGRLGPGEMIVLDLQEKLLMSNLEIKNKIASLRPYSDWIKQNRQVLIPTSFLTSTTLPLQEVFKRQTCFGYTSEDIELVIENMAIQGKEPTFCMGDDTPLAVLSGKSHVLYDYFKQRFAQVTNPPIDSLRESLVMSISSYLGSKTNSFEESSEKILKIKTPILSENDLVLIKNSELLTETLVTTFEAHFDSPQANGQSLFSTINQLCKQAKNLIQAGTKIIILSDKVCFESRTESYIPPLLVVGSLHQYLIKQGVRQKVSLIVETGQCWSTHHFACLLGYGASAVCPYLALETVRHWWMSERTQNLMSKGKMPNLTLIEVQNNYCKSVERGLLKILSKMGISLLTSYIGAQIFEILGLGKEVVDLAFEGTVSRIGGLSFADLAMETIDLCSAGFSKLNKKKLDNHGFVQYRPGGEYHLNNPEMSKALHKAVRENNYTLYEAYKQLLANRPPTNIRDLLEFNFRSCSVPLEKVENIFEITKRFCTGGMSLGALSREAHETLSIAMNRIGGKSNSGEGGEDSLRFTVLTDVDETGNSPSFPHLKGLKNGDSLSSAIKQIASGRFGVTPEYLVNAKQLEIKISQGAKPGEGGQLPGKKVSPYIATLRACKPGVTLISPPPHHDIYSIEDLAQLIFDLHQVNPECKVSVKLVSEIGVGTIAVGVAKAGAEIIQISGHDGGTGASPLSSIKHAGVPWELGLHEVHCLLVENNLREKVILRVDGGLRTGQDVVMAALLGADEYGFGTIAMIAGGCIMARVCHTNSCPVGVATQKEELRMRYPGVPENVVNYFIFLAEEIRVILSKLGFETLSQIIGRKDLINHNFDKKLCKTHCIDTSIFFNIKTNEYNFLEIPGGHSKKLKTSLLDYELLNSSDILYAIDNHKTLEKHIKISNSDRSVGAKLAGRLAKQYKNEGFRGSLILNFYGTAGQSFGSFNIKGVTLRLIGEANDYVGKSMSGGEIVIVPPSEVAFDASEQVILGNTCLYGATGGFLFAYGAAGERFAVRNSNAFSVLEGVGDHACEYMTGGRVVVLGKAGRNIAAGMTGGIAYFLDEYSNLPEKVNLDIVRIQRVVTNEARKQLIQLIEKHVLKTGSKKAVLILQQWEIFIHYFWQIVPPSESETSETNYFVENKVLAN.

Catalysis depends on cysteine 37, which acts as the For GATase activity. One can recognise a Glutamine amidotransferase type-2 domain in the interval 37–435 (CGVGFIAHLD…PGEMIVLDLQ (399 aa)). An FMN-binding site is contributed by 1116–1173 (LHEVHCLLVENNLREKVILRVDGGLRTGQDVVMAALLGADEYGFGTIAMIAGGCIMAR). [3Fe-4S] cluster is bound by residues cysteine 1169, cysteine 1175, and cysteine 1180.

The protein belongs to the glutamate synthase family. Monomer. The cofactor is [3Fe-4S] cluster. Requires FAD as cofactor. FMN is required as a cofactor.

The protein resides in the plastid. The protein localises to the chloroplast stroma. It carries out the reaction 2 oxidized [2Fe-2S]-[ferredoxin] + 2 L-glutamate = L-glutamine + 2 reduced [2Fe-2S]-[ferredoxin] + 2-oxoglutarate + 2 H(+). It participates in amino-acid biosynthesis; L-glutamate biosynthesis via GLT pathway; L-glutamate from 2-oxoglutarate and L-glutamine (ferredoxin route): step 1/1. The protein operates within energy metabolism; nitrogen metabolism. The chain is Ferredoxin-dependent glutamate synthase (gltB) from Cyanidium caldarium (Red alga).